The chain runs to 545 residues: Beta-sesquiphellandrene synthase (545 aa).

5 residues coordinate Mg(2+): Asp299, Asp303, Asn443, Ser447, and Glu451. A DDXXD motif motif is present at residues 299 to 303 (DDIMD).

This sequence belongs to the terpene synthase family. It depends on Mg(2+) as a cofactor. Requires Mn(2+) as cofactor.

It is found in the cytoplasm. It catalyses the reaction (2E,6E)-farnesyl diphosphate = beta-sesquiphellandrene + diphosphate. It functions in the pathway secondary metabolite biosynthesis; terpenoid biosynthesis. In terms of biological role, sesquiterpene synthase converting farnesyl diphosphate into beta-sesquiphellandrene and six minor products, zingiberene, 7-epi-sesquithujene, sesquisabinene A, (E)-alpha-bergamotene, (E)-beta-farnesene and beta-bisabolene. Can also accept geranyl diphosphate as substrate, producing nine monoterpenes, with myrcene and limonene as the major products. The sequence is that of Beta-sesquiphellandrene synthase (TPS2) from Sorghum bicolor (Sorghum).